We begin with the raw amino-acid sequence, 116 residues long: Regulator of ribonuclease activity B (116 aa).

It belongs to the RraB family. As to quaternary structure, interacts with the C-terminal region of Rne.

It localises to the cytoplasm. Its function is as follows. Globally modulates RNA abundance by binding to RNase E (Rne) and regulating its endonucleolytic activity. Can modulate Rne action in a substrate-dependent manner by altering the composition of the degradosome. The sequence is that of Regulator of ribonuclease activity B from Colwellia psychrerythraea (strain 34H / ATCC BAA-681) (Vibrio psychroerythus).